A 413-amino-acid polypeptide reads, in one-letter code: MQRANHTRPVLIIGAGLSGLAIGRLLTNNGIANIVFEASPPERSQGFAISLHDWGYSLLLEALGGLSLRAMTKAVAPDRFIGGTGWVDLIMRDNTTGKVLVEPDVDARPAVIRANRNSLRAWMADCGDDELDVRYGHRLKSISGSVGNVQAVFENGAEYRGSIVIAADGVHSAVRSQVLPHIVPEVLPVVVYHGEFQVSHDEYDRCVRPVIGTANILAGVGDGFNTPITVCNITKTQVHLDWSYSRPARGENDPLFSTKTPEDQTRDLPQALLEELASRQLAEPWAKYINPETIQQHSVFRWISRCVYMPTADALHAAQAGVVFIGDAWHAMPIFGGEGGNHALVDSVELAAAMVKEANVERAVAVYYEGAARRCQEAVRRSRSRFYVLHRPMAEWRDIAEKRRAKAALEQKH.

The signal sequence occupies residues methionine 1 to glycine 23. Residue asparagine 5 is glycosylated (N-linked (GlcNAc...) asparagine). Positions 37 and 48 each coordinate FAD. N-linked (GlcNAc...) asparagine glycosylation is present at asparagine 94. FAD is bound at residue arginine 120. Asparagine 232 is a glycosylation site (N-linked (GlcNAc...) asparagine). FAD-binding residues include aspartate 327 and glycine 340.

It belongs to the paxM FAD-dependent monooxygenase family. FAD serves as cofactor.

It participates in secondary metabolite biosynthesis; terpenoid biosynthesis. FAD-dependent monooxygenase; part of the gene cluster that mediates the biosynthesis of viridicatumtoxin, a tetracycline-like fungal meroterpenoid with a unique, fused spirobicyclic ring system. The first step of the pathway is the production of the malonamoyl-CoA starter unit for the polyketide synthase vrtA. The aldolase vrtJ may be involved in the synthesis of the malonamate substrate for malonamoyl-CoA synthetase vrtB. The polyketide synthase vrtA then may utilize the malonamoyl-CoA starter unit, followed by sequential condensation of eight malonyl-CoA units to form the polyketide backbone. The cyclization of the last ring could be mediated by the lactamase-like protein vrtG. The proposed post-PKS tailoring steps are a hydroxylation at C5 catalyzed the cytochrome P450 monooxygenase vrtE, a hydroxylation at C12a catalyzed by VrtH and/or VrtI, and an O-methylation by the O-methyltransferase vrtF. VrtC is then proposed to catalyze the transfer of a geranyl group synthesized by vrtD to the aromatic C ring of the tetracyclic polyketide intermediate of viridicatumtoxin to yield previridicatumtoxin. Finally, the cytochrome P450 monooxygenase vrtK catalyzes the spirocyclization of the geranyl moiety of previridicatumtoxin to afford viridicatumtoxin. In Penicillium aethiopicum, this protein is FAD-dependent monooxygenase vrtH.